We begin with the raw amino-acid sequence, 462 residues long: Squalene synthase LSS (462 aa).

Residues R48 and R73 each contribute to the NADP(+) site. D76, E79, and D80 together coordinate Mg(2+). Positions 214, 314, and 316 each coordinate NADP(+). 2 helical membrane-spanning segments follow: residues 399–419 (LVLV…PLLW) and 436–456 (LGLP…YQVF).

It belongs to the phytoene/squalene synthase family. Requires Mg(2+) as cofactor.

The protein localises to the membrane. It catalyses the reaction 2 (2E,6E)-farnesyl diphosphate + NADH + H(+) = squalene + 2 diphosphate + NAD(+). The catalysed reaction is 2 (2E,6E)-farnesyl diphosphate + NADPH + H(+) = squalene + 2 diphosphate + NADP(+). Its function is as follows. Converts farnesyl diphosphate (FPP) into squalene, a precursor for sterol biosynthesis in eukaryotes. In Botryococcus braunii (Green alga), this protein is Squalene synthase LSS.